The chain runs to 133 residues: MTLNLCVLTPNRIVWDSEVKEIILSTNSGQIGVLPNHAPIATSVDIGILRIRLNDQWLTMALMGGFARIGNNEITVLVNDAEKSGDIDPQEAQQTLEIAEAALRKAEGKRQTIEANLALRRARTRVEAINAIS.

Belongs to the ATPase epsilon chain family. In terms of assembly, F-type ATPases have 2 components, CF(1) - the catalytic core - and CF(0) - the membrane proton channel. CF(1) has five subunits: alpha(3), beta(3), gamma(1), delta(1), epsilon(1). CF(0) has three main subunits: a, b and c.

It localises to the plastid. Its subcellular location is the chloroplast thylakoid membrane. Functionally, produces ATP from ADP in the presence of a proton gradient across the membrane. This Lactuca sativa (Garden lettuce) protein is ATP synthase epsilon chain, chloroplastic.